The following is a 1121-amino-acid chain: Ataxin-2 homolog (1121 aa).

Residues 1 to 10 show a composition bias toward basic residues; the sequence is MNNNSKRKTR. The disordered stretch occupies residues 1–53; the sequence is MNNNSKRKTRPSGGGGGGGASGGISRYNANDNSLRPANNKSGAAGNSAGAGAG. Positions 12–22 are enriched in gly residues; sequence SGGGGGGGASG. Residues 27 to 36 show a composition bias toward polar residues; it reads YNANDNSLRP. A compositionally biased stretch (low complexity) spans 37–47; that stretch reads ANNKSGAAGNS. The Sm domain occupies 71 to 146; sequence FFMHSATALV…VVKIVAKDFD (76 aa). Residues S219 and S232 each carry the phosphoserine modification. Disordered stretches follow at residues 270 to 376, 422 to 458, 476 to 935, and 1039 to 1076; these read FAAV…GQGG, GKVMRGNVPPNSSGGGNISAVQGGNGNPVGQSKGGYQ, MHGS…TTGT, and QTPQSTTPSPGQPHQPFHPPPQPSPAGGGPQPAYTPPT. Over residues 274 to 310 the composition is skewed to basic and acidic residues; that stretch reads ERPEQDHRRDGDRERERNDRDREREERDRDRDRDRGN. Positions 323–347 are enriched in polar residues; that stretch reads ETMSSDRYITKQTRGPQMSHVSMSS. 2 stretches are compositionally biased toward gly residues: residues 367–376 and 434–448; these read ISGGGAGQGG and SGGGNISAVQGGNGN. Polar residues-rich tracts occupy residues 476–487 and 499–524; these read MHGSSQYRNPSH and ANANTNKPLPQRQIRQYQGSQSNSLN. Low complexity-rich tracts occupy residues 552–596, 623–684, 697–711, and 720–773; these read PPLQ…PQRQ, PPQQ…MQHQ, QPHYVPQPQQQQPQP, and QQQQ…APEP. The span at 774–789 shows a compositional bias: pro residues; the sequence is SQQPLPLYHPMPPPQT. Low complexity-rich tracts occupy residues 807-825 and 835-890; these read ILTAQQPPQQQQLAATPKP and TTTP…STPV. Composition is skewed to pro residues over residues 914–926 and 1048–1062; these read PSRPHTPQTPVPM and PGQPHQPFHPPPQPS.

The protein belongs to the ataxin-2 family.

Its subcellular location is the cytoplasm. In terms of biological role, regulator of actin filament formation, though it does not directly assemble with actin filaments. Required for oocyte specification and oocyte positioning in the female germline. Also required for normal eye development and bristle morphology. This chain is Ataxin-2 homolog, found in Drosophila pseudoobscura pseudoobscura (Fruit fly).